Reading from the N-terminus, the 595-residue chain is Actin-histidine N-methyltransferase (595 aa).

A disordered region spans residues 1–22 (MGKKSRVKTQKSGTGATATVSP). A compositionally biased stretch (polar residues) spans 10–20 (QKSGTGATATV). S-adenosyl-L-methionine contacts are provided by residues Arg75, 104–106 (EGF), Arg254, 275–279 (DMCNH), and 325–327 (SGF). The 221-residue stretch at 94-314 (EGFEMVNFKE…AGEQIYIFYG (221 aa)) folds into the SET domain. Residue Ser513 is modified to Phosphoserine. A compositionally biased stretch (polar residues) spans 549-572 (ENGLVNGENSVPNGTRSENENLNQ). The tract at residues 549 to 595 (ENGLVNGENSVPNGTRSENENLNQEESKRAVEDAKGSSSDNTAEVKE) is disordered. Residues 573-583 (EESKRAVEDAK) show a composition bias toward basic and acidic residues. The segment covering 584–595 (GSSSDNTAEVKE) has biased composition (polar residues).

It belongs to the class V-like SAM-binding methyltransferase superfamily. SETD3 actin-histidine methyltransferase family. As to quaternary structure, interacts with MYOD1. Phosphorylated by GSK3B, which is required for recognition by the SCF(FBXW7) complex and subsequent degradation. In terms of processing, ubiquitinated by the SCF(FBXW7) complex following phosphorylation by GSK3B, leading to its degradation by the proteasome.

The protein localises to the cytoplasm. Its subcellular location is the nucleus. The catalysed reaction is L-histidyl-[protein] + S-adenosyl-L-methionine = N(tele)-methyl-L-histidyl-[protein] + S-adenosyl-L-homocysteine + H(+). Protein-histidine N-methyltransferase that specifically mediates 3-methylhistidine (tele-methylhistidine) methylation of actin at 'His-73'. Histidine methylation of actin is required for smooth muscle contraction of the laboring uterus during delivery. Does not have protein-lysine N-methyltransferase activity and probably only catalyzes histidine methylation of actin. This Papio anubis (Olive baboon) protein is Actin-histidine N-methyltransferase.